The sequence spans 471 residues: 3-isopropylmalate dehydratase large subunit (471 aa).

[4Fe-4S] cluster-binding residues include Cys-347, Cys-407, and Cys-410.

The protein belongs to the aconitase/IPM isomerase family. LeuC type 1 subfamily. Heterodimer of LeuC and LeuD. [4Fe-4S] cluster is required as a cofactor.

It carries out the reaction (2R,3S)-3-isopropylmalate = (2S)-2-isopropylmalate. It functions in the pathway amino-acid biosynthesis; L-leucine biosynthesis; L-leucine from 3-methyl-2-oxobutanoate: step 2/4. Catalyzes the isomerization between 2-isopropylmalate and 3-isopropylmalate, via the formation of 2-isopropylmaleate. This is 3-isopropylmalate dehydratase large subunit from Geobacillus thermodenitrificans (strain NG80-2).